The chain runs to 368 residues: High affinity transport system protein p37 (368 aa).

The N-terminal stretch at M1–S25 is a signal peptide. A lipid anchor (N-palmitoyl cysteine) is attached at C26. C26 is lipidated: S-diacylglycerol cysteine.

It localises to the cell membrane. In terms of biological role, P37 is part of a high-affinity transport system. The sequence is that of High affinity transport system protein p37 (p37) from Mycoplasma genitalium (strain ATCC 33530 / DSM 19775 / NCTC 10195 / G37) (Mycoplasmoides genitalium).